The chain runs to 288 residues: Beta-lactamase PSE-1 (288 aa).

An N-terminal signal peptide occupies residues 1–17 (MKFLLAFSLLIPSVVFA). Serine 65 functions as the Acyl-ester intermediate in the catalytic mechanism. Cysteine 72 and cysteine 118 are joined by a disulfide. 229-231 (RSG) is a substrate binding site.

It belongs to the class-A beta-lactamase family. Monomer.

It catalyses the reaction a beta-lactam + H2O = a substituted beta-amino acid. With respect to regulation, inhibited by p-chloromercuribenzoate but not by cloxacillin. Functionally, hydrolyzes penicillin, ampicillin and carbenicillin but not other antibiotics including oxacillin, methicillin and cloxacillin. The polypeptide is Beta-lactamase PSE-1 (Pseudomonas aeruginosa).